The following is a 166-amino-acid chain: Salivary acidic proline-rich phosphoprotein 1/2 (166 aa).

Positions 1–16 (MLLILLSVALLAFSSA) are cleaved as a signal peptide. Residues 16-166 (AQDLDEDVSQ…QGPPQGQSPQ (151 aa)) are disordered. Q17 is modified (pyrrolidone carboxylic acid). The interval 17–46 (QDLDEDVSQEDVPLVISDGGDSEQFIDEER) is inhibits hydroxyapatite formation, binds to hydroxyapatite and calcium. S24 carries the phosphoserine; by FAM20C modification. S33 is subject to Phosphoserine; alternate. O-linked (GlcA) serine; alternate glycosylation is found at S33 and S38. Residue S38 is modified to Phosphoserine; by FAM20C; alternate. Composition is skewed to low complexity over residues 48–61 (GPPL…PSAG) and 68–82 (GPQQ…QQQQ). Pro residues-rich tracts occupy residues 83–111 (GPPP…PQGP) and 137–159 (GPPP…PQGP).

Proteolytically cleaved; PRP-2, PRP-1, PIF-S and Db-S yield PRP-4, PRP-3 (protein A), PIF-F and Db-F, respectively. In terms of processing, a hexuronic acid was shown to be linked to Ser-33 in about 40% of the polypeptides. Neither the structure of the carbohydrate (whether glucuronic acid or an isomer of), nor the linkage (whether a glycoside or an ester) has been definitely established.

It is found in the secreted. Its function is as follows. PRP's act as highly potent inhibitors of crystal growth of calcium phosphates. They provide a protective and reparative environment for dental enamel which is important for the integrity of the teeth. The protein is Salivary acidic proline-rich phosphoprotein 1/2 (PRH1) of Homo sapiens (Human).